Here is a 780-residue protein sequence, read N- to C-terminus: Ribosome biogenesis protein BOP1 homolog (780 aa).

Over residues 1 to 11 the composition is skewed to basic residues; the sequence is MTKKQAIKRKV. The segment at 1–155 is disordered; that stretch reads MTKKQAIKRK…DSDTSDEEDI (155 aa). Residues 17 to 26 show a composition bias toward polar residues; the sequence is TNEQSSASEP. Composition is skewed to acidic residues over residues 44-53, 60-72, 83-113, and 145-154; these read EDTTDDEGID, SSED…DEEG, AEGD…DAEE, and EDSDTSDEED. WD repeat units follow at residues 441-482, 484-522, 566-608, 611-649, 652-691, 695-734, and 750-780; these read GHTD…RTIE, NDVV…KLLI, THFK…SQIP, KSKG…LIKK, TNSK…KPYQ, LHRN…DLLQ, and RDEF…RLYT.

It belongs to the WD repeat BOP1/ERB1 family.

Its subcellular location is the nucleus. It localises to the nucleolus. The protein localises to the nucleoplasm. Required for maturation of ribosomal RNAs and formation of the large ribosomal subunit. This chain is Ribosome biogenesis protein BOP1 homolog, found in Drosophila virilis (Fruit fly).